A 52-amino-acid polypeptide reads, in one-letter code: Keratin-associated protein 19-2 (52 aa).

Belongs to the KRTAP type 19 family. As to quaternary structure, interacts with hair keratins.

Functionally, in the hair cortex, hair keratin intermediate filaments are embedded in an interfilamentous matrix, consisting of hair keratin-associated proteins (KRTAP), which are essential for the formation of a rigid and resistant hair shaft through their extensive disulfide bond cross-linking with abundant cysteine residues of hair keratins. The matrix proteins include the high-sulfur and high-glycine-tyrosine keratins. The polypeptide is Keratin-associated protein 19-2 (KRTAP19-2) (Homo sapiens (Human)).